The chain runs to 122 residues: Large ribosomal subunit protein uL14 (122 aa).

The protein belongs to the universal ribosomal protein uL14 family. As to quaternary structure, part of the 50S ribosomal subunit. Forms a cluster with proteins L3 and L19. In the 70S ribosome, L14 and L19 interact and together make contacts with the 16S rRNA in bridges B5 and B8.

Its function is as follows. Binds to 23S rRNA. Forms part of two intersubunit bridges in the 70S ribosome. The polypeptide is Large ribosomal subunit protein uL14 (Nitrosococcus oceani (strain ATCC 19707 / BCRC 17464 / JCM 30415 / NCIMB 11848 / C-107)).